A 1146-amino-acid polypeptide reads, in one-letter code: Ankyrin repeat domain-containing protein 24 (1146 aa).

ANK repeat units follow at residues 81–110 (EGKS…NVMS), 114–143 (AGYN…VVDV), 147–176 (SGWT…HLNP), 180–209 (SGAT…AAND), and 213–242 (QGRT…QPGI). Disordered regions lie at residues 272–320 (RPSP…PDDR), 607–627 (REME…GAQA), and 766–785 (ERVR…GDTT). The segment covering 286–297 (EASSQNSMSSHG) has biased composition (polar residues). Residues 320–517 (RDAYEEIVRL…QALRQQETRE (198 aa)) are a coiled coil. The stretch at 714–1110 (AAEASEKLQV…AARDHSSVVA (397 aa)) forms a coiled coil.

In terms of assembly, homodimer. Interacts (via C-terminal domain) with TRIOBP (via C-terminal domain) isoform 4; recruits TRIOBP isoform 4 to stereocilia rootlets.

The protein resides in the cell membrane. Its subcellular location is the cell projection. The protein localises to the stereocilium. Component of the stereocilia rootlet in hair cells of inner ear. Bridges the apical plasma membrane with the lower rootlet and maintains normal distribution of TRIOBP, thereby reinforcing stereocilia insertion points and organizing rootlets for hearing with long-term resilience. This Homo sapiens (Human) protein is Ankyrin repeat domain-containing protein 24.